The sequence spans 498 residues: MASQGTKRSYEQMETGGERQNATEIRASVGRMIGGIGRFYIQMCTELKLSDYEGRLIQNSITIERMVLSAFDERRNKYLEEHPSAGKDPKKTGGPIYRRIDGKWIRELILYDKEEIRRIWRQANNGEDTTAGLTHMMIWHSNLNDATYQRTRALVRTGMDPRMCSLMQGSTLPRRSGAAGAAVKGVGTVVMELIRMIKRGINDRNFWRGENGRRTRIAYERMCNILKGKFQTAAQRAMMDQVRESRNPGNAEIEDLIFLARSALILRGSVAHKSCLPACVYGLAVASGHDFEREGYSLVGIDPFRLLQNSQVFSLIRPNENPAHKSQLVWMACHSAAFEDLRVSSFIRGKRVVPRGQLSTRGVQIASNENMETMDSSTLELRSRYWAIRTRSGGNTNQQRASAGQISVQPTFSVQRNLPFERATVMAAFTGNTEGRTSDMRTEIIRIMESARPEDVSFQGRGVFELSDEKATSPIVPSFDMSNEGSYFFGDNAEEYDN.

Residues 1 to 18 carry the Unconventional nuclear localization signal motif; that stretch reads MASQGTKRSYEQMETGGE. Residues 1–21 form a disordered region; sequence MASQGTKRSYEQMETGGERQN. Positions 198 to 216 match the Bipartite nuclear localization signal motif; it reads KRGINDRNFWRGENGRRTR.

It belongs to the influenza viruses nucleoprotein family. Homomultimerizes to form the nucleocapsid. May bind host exportin-1/XPO1. Binds to viral genomic RNA. Protein-RNA contacts are mediated by a combination of electrostatic interactions between positively charged residues and the phosphate backbone and planar interactions between aromatic side chains and bases. Post-translationally, late in virus-infected cells, may be cleaved from a 56-kDa protein to a 53-kDa protein by a cellular caspase. This cleavage might be a marker for the onset of apoptosis in infected cells or have a specific function in virus host interaction.

It is found in the virion. It localises to the host nucleus. Functionally, encapsidates the negative strand viral RNA, protecting it from nucleases. The encapsidated genomic RNA is termed the ribonucleoprotein (RNP) and serves as template for transcription and replication. The RNP needs to be localized in the host nucleus to start an infectious cycle, but is too large to diffuse through the nuclear pore complex. NP comprises at least 2 nuclear localization signals that are responsible for the active RNP import into the nucleus through cellular importin alpha/beta pathway. Later in the infection, nclear export of RNPs are mediated through viral proteins NEP interacting with M1 which binds nucleoproteins. It is possible that nucleoprotein binds directly host exportin-1/XPO1 and plays an active role in RNPs nuclear export. M1 interaction with RNP seems to hide nucleoprotein's nuclear localization signals. Soon after a virion infects a new cell, M1 dissociates from the RNP under acidification of the virion driven by M2 protein. Dissociation of M1 from RNP unmasks nucleoprotein's nuclear localization signals, targeting the RNP to the nucleus. The protein is Nucleoprotein of Influenza A virus (strain A/Swine/Iowa/15/1930 H1N1).